Here is a 327-residue protein sequence, read N- to C-terminus: MNIISDKEILEVRTSQVFRFSVYFIDTSCIISMAVTVLAIFQLHSKQVFNPSTTRLLITDLVFINIHNLSYIFLQNWSLFRSFFYQTANDIMFKSEECWPHHVTNEFTKVVTVFNQFALIINRISVTIDSKRFSHANYGFLLAILSLIASTVFTAQQHFLGPIHGMRTTSCFRESDVVLDLKTEHIIPYLAICLTSIVCSLLLIIYVKKTQKTKTYDIESEYTKKEAVVSSISVAILGIIQLVLFCFYDTFLTIFAKLTAENPNVHDTNIIGWFYTSPLNAIISPTAVFLYISWIKKNRQMHIRKMTKVNKSENGCHFQQLSVMWNK.

The next 6 helical transmembrane spans lie at 20 to 40 (FSVY…VLAI), 56 to 76 (LLIT…FLQN), 133 to 153 (FSHA…STVF), 186 to 206 (IIPY…LIIY), 227 to 247 (AVVS…LFCF), and 270 to 290 (IIGW…AVFL).

Belongs to the nematode receptor-like protein sra family.

It localises to the membrane. This is Serpentine receptor class alpha-33 (sra-33) from Caenorhabditis elegans.